The following is a 312-amino-acid chain: Putative HTH-type transcriptional regulatory protein TV0294 (312 aa).

The HTH cro/C1-type domain occupies 133-186 (LRERRNELNLSIGNISSYLGVSRRSVSLYENGSAATIDIFIRLRNILKADIVDH). The segment at residues 144–163 (IGNISSYLGVSRRSVSLYEN) is a DNA-binding region (H-T-H motif).

The polypeptide is Putative HTH-type transcriptional regulatory protein TV0294 (Thermoplasma volcanium (strain ATCC 51530 / DSM 4299 / JCM 9571 / NBRC 15438 / GSS1)).